Consider the following 429-residue polypeptide: Cyclin-B2-3 (429 aa).

Positions Ala-86–Asp-101 are enriched in basic and acidic residues. The disordered stretch occupies residues Ala-86 to Glu-109.

The protein belongs to the cyclin family. Cyclin AB subfamily.

The sequence is that of Cyclin-B2-3 (CYCB2-3) from Arabidopsis thaliana (Mouse-ear cress).